The chain runs to 283 residues: Bifunctional protein FolD (283 aa).

NADP(+) contacts are provided by residues 165 to 167, Ser190, and Val231; that span reads GRS.

It belongs to the tetrahydrofolate dehydrogenase/cyclohydrolase family. In terms of assembly, homodimer.

It carries out the reaction (6R)-5,10-methylene-5,6,7,8-tetrahydrofolate + NADP(+) = (6R)-5,10-methenyltetrahydrofolate + NADPH. It catalyses the reaction (6R)-5,10-methenyltetrahydrofolate + H2O = (6R)-10-formyltetrahydrofolate + H(+). It participates in one-carbon metabolism; tetrahydrofolate interconversion. In terms of biological role, catalyzes the oxidation of 5,10-methylenetetrahydrofolate to 5,10-methenyltetrahydrofolate and then the hydrolysis of 5,10-methenyltetrahydrofolate to 10-formyltetrahydrofolate. The sequence is that of Bifunctional protein FolD from Anoxybacillus flavithermus (strain DSM 21510 / WK1).